A 213-amino-acid chain; its full sequence is Pyridoxine/pyridoxamine 5'-phosphate oxidase (213 aa).

Residues 10–13 (REEY) and Lys68 contribute to the substrate site. FMN contacts are provided by residues 63–68 (RMLLLK), 78–79 (FT), Lys85, and Gln107. The substrate site is built by Tyr125, Arg129, and Ser133. FMN-binding positions include 142-143 (QS) and Trp186. 192 to 194 (RLH) contributes to the substrate binding site. Residue Arg196 participates in FMN binding.

Belongs to the pyridoxamine 5'-phosphate oxidase family. As to quaternary structure, homodimer. Requires FMN as cofactor.

It catalyses the reaction pyridoxamine 5'-phosphate + O2 + H2O = pyridoxal 5'-phosphate + H2O2 + NH4(+). The enzyme catalyses pyridoxine 5'-phosphate + O2 = pyridoxal 5'-phosphate + H2O2. It functions in the pathway cofactor metabolism; pyridoxal 5'-phosphate salvage; pyridoxal 5'-phosphate from pyridoxamine 5'-phosphate: step 1/1. Its pathway is cofactor metabolism; pyridoxal 5'-phosphate salvage; pyridoxal 5'-phosphate from pyridoxine 5'-phosphate: step 1/1. Functionally, catalyzes the oxidation of either pyridoxine 5'-phosphate (PNP) or pyridoxamine 5'-phosphate (PMP) into pyridoxal 5'-phosphate (PLP). In Nocardioides sp. (strain ATCC BAA-499 / JS614), this protein is Pyridoxine/pyridoxamine 5'-phosphate oxidase.